The primary structure comprises 76 residues: Exodeoxyribonuclease 7 small subunit (76 aa).

This sequence belongs to the XseB family. Heterooligomer composed of large and small subunits.

The protein localises to the cytoplasm. It carries out the reaction Exonucleolytic cleavage in either 5'- to 3'- or 3'- to 5'-direction to yield nucleoside 5'-phosphates.. Its function is as follows. Bidirectionally degrades single-stranded DNA into large acid-insoluble oligonucleotides, which are then degraded further into small acid-soluble oligonucleotides. In Geotalea daltonii (strain DSM 22248 / JCM 15807 / FRC-32) (Geobacter daltonii), this protein is Exodeoxyribonuclease 7 small subunit.